The primary structure comprises 151 residues: Group 10 secretory phospholipase A2 (151 aa).

The signal sequence occupies residues 1–17 (MLLLLLLLLLGPGPGFS). Positions 18–28 (EATRRSHVYKR) are excised as a propeptide. 8 disulfides stabilise this stretch: C39/C97, C53/C143, C55/C71, C70/C125, C76/C150, C77/C118, C86/C111, and C104/C116. The Ca(2+) site is built by Y54, G56, and G58. Residue H74 is part of the active site. A Ca(2+)-binding site is contributed by D75. Residue D119 is part of the active site.

Belongs to the phospholipase A2 family. Interacts with PLA2R1; this interaction mediates PLA2G10 clearance and inactivation. Ca(2+) is required as a cofactor. As to expression, expressed at high levels in testis and the gastrointestinal tract including stomach and colon. Expressed at lower levels in other tissues including small intestine, uterus, oviduct, lung, thymus, spleen and brain. Expressed in Paneth-like secretory epithelial cells of the colon. Expressed in gastric and ileac epithelial cells and in glandular epithelium of intestinal mucosa (at protein level). Expressed in late spermatogenic cells, spermatocytes and spermatids, but not spermatogonia in seminiferous tubules (at protein level). Expressed mainly in the apical side of endometrial epithelial cells and in the interstitium beneath the epithelium of uterus (at protein level). Expressed in resident spleen macrophages (at protein level). Expressed at outermost layer of hair follicles. Expressed in dorsal root ganglia in both NEFH-positive A-fibers and PRPH-positive C-fibers (at protein level).

Its subcellular location is the secreted. It is found in the lysosome. The protein localises to the cytoplasmic vesicle. The protein resides in the secretory vesicle. It localises to the acrosome. It catalyses the reaction a 1,2-diacyl-sn-glycero-3-phosphocholine + H2O = a 1-acyl-sn-glycero-3-phosphocholine + a fatty acid + H(+). The catalysed reaction is 1-hexadecanoyl-2-(9Z-octadecenoyl)-sn-glycero-3-phosphocholine + H2O = 1-hexadecanoyl-sn-glycero-3-phosphocholine + (9Z)-octadecenoate + H(+). It carries out the reaction 1-octadecanoyl-2-(5Z,8Z,11Z,14Z-eicosatetraenoyl)-sn-glycero-3-phosphocholine + H2O = 1-octadecanoyl-sn-glycero-3-phosphocholine + (5Z,8Z,11Z,14Z)-eicosatetraenoate + H(+). The enzyme catalyses 1,2-dihexadecanoyl-sn-glycero-3-phosphocholine + H2O = 1-hexadecanoyl-sn-glycero-3-phosphocholine + hexadecanoate + H(+). It catalyses the reaction 1-hexadecanoyl-2-(9Z-octadecenoyl)-sn-glycero-3-phosphoglycerol + H2O = 1-hexadecanoyl-sn-glycero-3-phosphoglycerol + (9Z)-octadecenoate + H(+). The catalysed reaction is 1,2-dihexadecanoyl-sn-glycero-3-phospho-(1'-sn-glycerol) + H2O = 1-hexadecanoyl-sn-glycero-3-phospho-(1'-sn-glycerol) + hexadecanoate + H(+). It carries out the reaction 1-hexadecanoyl-2-(9Z-octadecenoyl)-sn-glycero-3-phospho-L-serine + H2O = 1-hexadecanoyl-sn-glycero-3-phospho-L-serine + (9Z)-octadecenoate + H(+). The enzyme catalyses 1-hexadecanoyl-2-(9Z,12Z-octadecadienoyl)-sn-glycero-3-phosphoethanolamine + H2O = 1-hexadecanoyl-sn-glycero-3-phosphoethanolamine + (9Z,12Z)-octadecadienoate + H(+). It catalyses the reaction 1-hexadecanoyl-2-(9Z-octadecenoyl)-sn-glycero-3-phosphate + H2O = 1-hexadecanoyl-sn-glycero-3-phosphate + (9Z)-octadecenoate + H(+). The catalysed reaction is 1-O-hexadecyl-2-acetyl-sn-glycero-3-phosphocholine + H2O = 1-O-hexadecyl-sn-glycero-3-phosphocholine + acetate + H(+). Functionally, secretory calcium-dependent phospholipase A2 that primarily targets extracellular phospholipids. Hydrolyzes the ester bond of the fatty acyl group attached at sn-2 position of phospholipids with preference for phosphatidylcholines and phosphatidylglycerols over phosphatidylethanolamines. Preferentially releases sn-2 omega-6 and omega-3 polyunsaturated fatty acyl (PUFA) chains over saturated fatty acyls. Contributes to phospholipid remodeling of very low-density lipoprotein (VLDL), low-density lipoprotein (LDL) and high-density lipoprotein (HDL) particles. Hydrolyzes LDL phospholipids releasing unsaturated fatty acids that regulate macrophage differentiation toward foam cells. Efficiently hydrolyzes and inactivates PAF, a potent lipid mediator present in oxidized LDL. May act in an autocrine and paracrine manner. Secreted by lung epithelium, targets membrane phospholipids of infiltrating eosinophils, releasing arachidonate and boosting eicosanoid and cysteinyl leukotriene synthesis involved in airway inflammatory response. Secreted by gut epithelium, hydrolyzes dietary and biliary phosphatidylcholines in the gastrointestinal lumen, thereby regulating adipogenesis and body weight. Plays a stem cell regulator role in colon epithelium. Within intracellular compartment, mediates Paneth-like cell differentiation and its stem cell supporting functions by inhibiting Wnt signaling pathway in intestinal stem cell (ISC). Secreted in the intestinal lumen upon inflammation, acts in an autocrine way and promotes prostaglandin E2 synthesis that stimulates the Wnt signaling pathway in ISCs and tissue regeneration. May participate in hair follicle morphogenesis by regulating phosphatidylethanolamines metabolism at the outermost epithelial layer and facilitating melanin synthesis. By generating lysophosphatidylcholines (LPCs) at sperm acrosome controls sperm cell capacitation, acrosome reaction and overall fertility. May promote neurite outgrowth in neuron fibers involved in nociception. Contributes to lipid remodeling of cellular membranes and generation of lipid mediators involved in pathogen clearance. Cleaves sn-2 fatty acyl chains of phosphatidylglycerols and phosphatidylethanolamines, which are major components of membrane phospholipids in bacteria. Displays bactericidal activity against Gram-positive bacteria by directly hydrolyzing phospholipids of the bacterial membrane. In pulmonary epithelium, may contribute to host defense response against adenoviral infection. Prevents adenovirus entry into host cells by hydrolyzing host cell plasma membrane, releasing C16:0 LPCs that inhibit virus-mediated membrane fusion and viral infection. Likely prevents adenoviral entry into the endosomes of host cells. May play a role in maturation and activation of innate immune cells including macrophages, group 2 innate lymphoid cells and mast cells. The sequence is that of Group 10 secretory phospholipase A2 (Pla2g10) from Mus musculus (Mouse).